The following is a 176-amino-acid chain: Membrane glycoprotein UL144 (176 aa).

The signal sequence occupies residues 1 to 20 (MKPLVMLICFGVILLQLGVT). One copy of the TNFR-Cys repeat lies at 58–95 (PCPNGTYVSGLYNCTDCTQCNVTQVMIRNCTSTNNTVC). Cystine bridges form between Cys59–Cys71, Cys74–Cys87, and Cys77–Cys95. Residues 134–154 (LAWLSLFIFLVGIILLILYLI) traverse the membrane as a helical segment.

As to quaternary structure, interacts with host TRIM23; this interaction causes auto-ubiquitination of TRAF6, leading to NF-kappaB activation.

Its subcellular location is the membrane. In terms of biological role, activates NF-kappa-B in a tumor necrosis factor receptor (TNFR)-associated factor 6 (TRAF6)-dependent manner, causing the up-regulation of the chemokine CCL22. This is Membrane glycoprotein UL144 (UL144) from Human cytomegalovirus (strain Merlin) (HHV-5).